Reading from the N-terminus, the 309-residue chain is Verprolin (309 aa).

The segment covering 1 to 13 has biased composition (pro residues); that stretch reads MAPAPPPPPPAPA. Residues 1–273 form a disordered region; it reads MAPAPPPPPP…PNRVDDHGRF (273 aa). A WH2 domain is found at 27–44; the sequence is DRSALLNSIQKGKKLKKA. Polar residues predominate over residues 82–91; it reads LPTSSNNTQQ. Over residues 141–207 the composition is skewed to pro residues; sequence TSAPPRPSIP…PPKVPPPPLS (67 aa).

This sequence belongs to the verprolin family. Interacts with wsp1. Interacts with myo1 (via SH3 domain). Interacts with actin monomers.

Its subcellular location is the cytoplasm. The protein localises to the cytoskeleton. Involved in cytoskeletal organization and cellular growth. May exert its effects on the cytoskeleton directly, or indirectly via proline-binding proteins such as profilin or proteins possessing SH3 domains. Plays a role in actin patch assembly by enhancing the ability of myo1 to stimulate actin polymerization by the Arp2/3 complex. The sequence is that of Verprolin from Schizosaccharomyces pombe (strain 972 / ATCC 24843) (Fission yeast).